We begin with the raw amino-acid sequence, 624 residues long: DNA mismatch repair protein MutL (624 aa).

Residues 416–436 (LTPSVDQPDTGDGENPVAPEK) are disordered.

This sequence belongs to the DNA mismatch repair MutL/HexB family.

Its function is as follows. This protein is involved in the repair of mismatches in DNA. It is required for dam-dependent methyl-directed DNA mismatch repair. May act as a 'molecular matchmaker', a protein that promotes the formation of a stable complex between two or more DNA-binding proteins in an ATP-dependent manner without itself being part of a final effector complex. In Chlorobaculum tepidum (strain ATCC 49652 / DSM 12025 / NBRC 103806 / TLS) (Chlorobium tepidum), this protein is DNA mismatch repair protein MutL.